The primary structure comprises 148 residues: UPF0178 protein DP1304 (148 aa).

It belongs to the UPF0178 family.

This chain is UPF0178 protein DP1304, found in Desulfotalea psychrophila (strain LSv54 / DSM 12343).